A 102-amino-acid chain; its full sequence is Small ribosomal subunit protein uS10 (102 aa).

Belongs to the universal ribosomal protein uS10 family. Part of the 30S ribosomal subunit.

Its function is as follows. Involved in the binding of tRNA to the ribosomes. The polypeptide is Small ribosomal subunit protein uS10 (Brucella abortus (strain S19)).